Reading from the N-terminus, the 554-residue chain is Chaperonin GroEL (554 aa).

ATP-binding positions include 30–33, lysine 51, 87–91, glycine 416, and aspartate 503; these read TLGP and DGTTT.

It belongs to the chaperonin (HSP60) family. Forms a cylinder of 14 subunits composed of two heptameric rings stacked back-to-back. Interacts with the co-chaperonin GroES.

It localises to the cytoplasm. It carries out the reaction ATP + H2O + a folded polypeptide = ADP + phosphate + an unfolded polypeptide.. In terms of biological role, together with its co-chaperonin GroES, plays an essential role in assisting protein folding. The GroEL-GroES system forms a nano-cage that allows encapsulation of the non-native substrate proteins and provides a physical environment optimized to promote and accelerate protein folding. The chain is Chaperonin GroEL from Holospora obtusa.